The sequence spans 63 residues: Large ribosomal subunit protein uL29 (63 aa).

The protein belongs to the universal ribosomal protein uL29 family.

The chain is Large ribosomal subunit protein uL29 from Shigella dysenteriae serotype 1 (strain Sd197).